The primary structure comprises 298 residues: MELLNLKKQGIDIKEQIPLSRYTFTKTGGEAEYLAFPKTTDEVEKLVKVTQENKIPLTIIGNASNLIIRDGGIDGLVIILTELKNIEVNGNEVTADAGATIVDTAFTAANHGLSGMEFAAGIPGSIGGGVFMNAGAYGGEMQEAVKSVNVLTRAGEYKTYSNQEMDFSYRHSIIQENGDIVLSATFSLKPGNKLQILDHMDYLNALRRYKQPLEYPSCGSVFKRPKGHFVGPMIIKAGLQGKQIGGAQDSTKHAGFIVNKGGATATDYLDLIHLIQKVIKEKYDIDLHTEVRIIGKEN.

Positions Lys26–Gly191 constitute an FAD-binding PCMH-type domain. The active site involves Arg170. Ser220 serves as the catalytic Proton donor. Glu290 is an active-site residue.

Belongs to the MurB family. It depends on FAD as a cofactor.

It localises to the cytoplasm. The enzyme catalyses UDP-N-acetyl-alpha-D-muramate + NADP(+) = UDP-N-acetyl-3-O-(1-carboxyvinyl)-alpha-D-glucosamine + NADPH + H(+). The protein operates within cell wall biogenesis; peptidoglycan biosynthesis. Cell wall formation. This chain is UDP-N-acetylenolpyruvoylglucosamine reductase, found in Lactobacillus acidophilus (strain ATCC 700396 / NCK56 / N2 / NCFM).